The chain runs to 300 residues: N-acetylmuramic acid 6-phosphate etherase (300 aa).

The 163-residue stretch at 55-217 (IAERLRAGGR…STGAMIRLGK (163 aa)) folds into the SIS domain. Glu-83 serves as the catalytic Proton donor. The active site involves Glu-114.

Belongs to the GCKR-like family. MurNAc-6-P etherase subfamily. As to quaternary structure, homodimer.

It carries out the reaction N-acetyl-D-muramate 6-phosphate + H2O = N-acetyl-D-glucosamine 6-phosphate + (R)-lactate. Its pathway is amino-sugar metabolism; N-acetylmuramate degradation. Functionally, specifically catalyzes the cleavage of the D-lactyl ether substituent of MurNAc 6-phosphate, producing GlcNAc 6-phosphate and D-lactate. This chain is N-acetylmuramic acid 6-phosphate etherase, found in Symbiobacterium thermophilum (strain DSM 24528 / JCM 14929 / IAM 14863 / T).